Here is a 397-residue protein sequence, read N- to C-terminus: Elongation factor Tu (397 aa).

In terms of domain architecture, tr-type G spans 10–207 (KPHVNVGTVG…AIDAYVPDPV (198 aa)). A G1 region spans residues 19–26 (GHIDHGKT). A GTP-binding site is contributed by 19-26 (GHIDHGKT). Mg(2+) is bound at residue T26. Residues 60 to 64 (GITIA) form a G2 region. The segment at 81–84 (DCPG) is G3. GTP contacts are provided by residues 81–85 (DCPGH) and 136–139 (NKVD). The G4 stretch occupies residues 136–139 (NKVD). Residues 174 to 176 (SAL) are G5.

It belongs to the TRAFAC class translation factor GTPase superfamily. Classic translation factor GTPase family. EF-Tu/EF-1A subfamily. As to quaternary structure, monomer.

The protein localises to the cytoplasm. It carries out the reaction GTP + H2O = GDP + phosphate + H(+). Its function is as follows. GTP hydrolase that promotes the GTP-dependent binding of aminoacyl-tRNA to the A-site of ribosomes during protein biosynthesis. This chain is Elongation factor Tu, found in Syntrophobacter fumaroxidans (strain DSM 10017 / MPOB).